A 301-amino-acid polypeptide reads, in one-letter code: Sulfate adenylyltransferase subunit 2 (301 aa).

Residues E278 to F301 form a disordered region.

This sequence belongs to the PAPS reductase family. CysD subfamily. Sulfate-activating enzymes, NodP and NodQ, may be physically associated.

It carries out the reaction sulfate + ATP + H(+) = adenosine 5'-phosphosulfate + diphosphate. Functionally, proposed to provide activated sulfate for transfer to nod factor. The polypeptide is Sulfate adenylyltransferase subunit 2 (nodP) (Azospirillum brasilense).